Reading from the N-terminus, the 281-residue chain is Phosphonates import ATP-binding protein PhnC (281 aa).

An ABC transporter domain is found at 5–253 (IEVCGLTKSF…MLRDLYGTEA (249 aa)). 38–45 (GASGSGKS) contacts ATP.

It belongs to the ABC transporter superfamily. Phosphonates importer (TC 3.A.1.9.1) family. As to quaternary structure, the complex is composed of two ATP-binding proteins (PhnC), two transmembrane proteins (PhnE) and a solute-binding protein (PhnD).

The protein localises to the cell inner membrane. It catalyses the reaction phosphonate(out) + ATP + H2O = phosphonate(in) + ADP + phosphate + H(+). In terms of biological role, part of the ABC transporter complex PhnCDE involved in phosphonates import. Responsible for energy coupling to the transport system. The sequence is that of Phosphonates import ATP-binding protein PhnC from Cupriavidus pinatubonensis (strain JMP 134 / LMG 1197) (Cupriavidus necator (strain JMP 134)).